Reading from the N-terminus, the 49-residue chain is Defensin-like protein 1 (49 aa).

4 disulfides stabilise this stretch: C3–C49, C14–C35, C20–C43, and C24–C45.

It belongs to the DEFL family.

The protein localises to the secreted. Functionally, possesses antimicrobial activity sensitive to inorganic cations. Binds specifically to the fungal plasma membrane. Has no inhibitory effect on insect gut alpha-amylase. This Clitoria ternatea (Butterfly pea) protein is Defensin-like protein 1.